Consider the following 219-residue polypeptide: Ribonuclease HII (219 aa).

Residues arginine 30 to serine 219 enclose the RNase H type-2 domain. Residues aspartate 36, glutamate 37, and aspartate 128 each coordinate a divalent metal cation.

It belongs to the RNase HII family. The cofactor is Mn(2+). Mg(2+) is required as a cofactor.

The protein localises to the cytoplasm. It catalyses the reaction Endonucleolytic cleavage to 5'-phosphomonoester.. In terms of biological role, endonuclease that specifically degrades the RNA of RNA-DNA hybrids. The sequence is that of Ribonuclease HII from Pelobacter propionicus (strain DSM 2379 / NBRC 103807 / OttBd1).